A 442-amino-acid polypeptide reads, in one-letter code: Thymidine phosphorylase (442 aa).

It belongs to the thymidine/pyrimidine-nucleoside phosphorylase family. As to quaternary structure, homodimer.

It catalyses the reaction thymidine + phosphate = 2-deoxy-alpha-D-ribose 1-phosphate + thymine. The protein operates within pyrimidine metabolism; dTMP biosynthesis via salvage pathway; dTMP from thymine: step 1/2. Functionally, the enzymes which catalyze the reversible phosphorolysis of pyrimidine nucleosides are involved in the degradation of these compounds and in their utilization as carbon and energy sources, or in the rescue of pyrimidine bases for nucleotide synthesis. This Vibrio vulnificus (strain CMCP6) protein is Thymidine phosphorylase.